The following is a 122-amino-acid chain: Large ribosomal subunit protein uL14 (122 aa).

This sequence belongs to the universal ribosomal protein uL14 family. Part of the 50S ribosomal subunit. Forms a cluster with proteins L3 and L19. In the 70S ribosome, L14 and L19 interact and together make contacts with the 16S rRNA in bridges B5 and B8.

Its function is as follows. Binds to 23S rRNA. Forms part of two intersubunit bridges in the 70S ribosome. The sequence is that of Large ribosomal subunit protein uL14 from Syntrophotalea carbinolica (strain DSM 2380 / NBRC 103641 / GraBd1) (Pelobacter carbinolicus).